Consider the following 428-residue polypeptide: GTPase Obg (428 aa).

The Obg domain occupies 1 to 158 (MFVDQVKIYV…RDVILELKVL (158 aa)). Positions 117–145 (ARGGRGGRGNSRFATPTNPAPEIAENGEP) are disordered. The OBG-type G domain maps to 159–329 (ADVGLVGFPS…LLFEVANLLE (171 aa)). Residues 165 to 172 (GFPSVGKS), 190 to 194 (FTTIV), 212 to 215 (DLPG), 282 to 285 (NKMD), and 310 to 312 (SAV) contribute to the GTP site. Residues Ser172 and Thr192 each contribute to the Mg(2+) site. One can recognise an OCT domain in the interval 350 to 428 (KLETEGVKFD…ILEYEFEFID (79 aa)).

It belongs to the TRAFAC class OBG-HflX-like GTPase superfamily. OBG GTPase family. Monomer. Mg(2+) serves as cofactor.

It localises to the cytoplasm. In terms of biological role, an essential GTPase which binds GTP, GDP and possibly (p)ppGpp with moderate affinity, with high nucleotide exchange rates and a fairly low GTP hydrolysis rate. Plays a role in control of the cell cycle, stress response, ribosome biogenesis and in those bacteria that undergo differentiation, in morphogenesis control. The polypeptide is GTPase Obg (Bacillus cereus (strain ATCC 10987 / NRS 248)).